A 201-amino-acid chain; its full sequence is B-cell CLL/lymphoma 7 protein family member B-B (201 aa).

The disordered stretch occupies residues 104-201 (QSNTKVDSSS…VCTEHNSTVS (98 aa)).

Belongs to the BCL7 family.

This chain is B-cell CLL/lymphoma 7 protein family member B-B, found in Danio rerio (Zebrafish).